The following is a 78-amino-acid chain: TP53-regulated inhibitor of apoptosis 1 (78 aa).

Residues 1 to 52 (MNSVGEECTDMKREYDQCFNRWFAEKFLKGECSGDPCTELFRRYRDCVQKAI) are a coiled coil. In terms of domain architecture, CHCH spans 5-55 (GEECTDMKREYDQCFNRWFAEKFLKGECSGDPCTELFRRYRDCVQKAIKDK). 2 consecutive short sequence motifs (cx9C motif) follow at residues 8 to 18 (CTDMKREYDQC) and 37 to 47 (CTELFRRYRDC). 2 cysteine pairs are disulfide-bonded: Cys-8-Cys-47 and Cys-18-Cys-37.

Belongs to the TRIAP1/MDM35 family. In terms of assembly, monomer. Forms a complex with prelid1 in the mitochondrion intermembrane space. Interacts with prelid3a. Expressed in the developing pronephros.

Its subcellular location is the mitochondrion. It is found in the mitochondrion intermembrane space. It catalyses the reaction a 1,2-diacyl-sn-glycero-3-phosphate(in) = a 1,2-diacyl-sn-glycero-3-phosphate(out). Functionally, involved in the modulation of the mitochondrial apoptotic pathway by ensuring the accumulation of cardiolipin (CL) in mitochondrial membranes. The triap1:prelid1 complex probably functions as a phosphatidic acid (PA) transporter across the mitochondrion intermembrane space to provide PA for cardiolipin CL synthesis in the inner membrane. Likewise, the triap1:prelid3a complex mediates the transfer of phosphatidic acid (PA) between liposomes (in vitro) and probably functions as a PA transporter across the mitochondrion intermembrane space (in vivo). Mediates cell survival by inhibiting activation of caspase-9 which prevents induction of apoptosis. Required for pronephros development; probably involved at an early stage in the formation of pronephric components derived from the somatic layer. The sequence is that of TP53-regulated inhibitor of apoptosis 1 from Xenopus tropicalis (Western clawed frog).